Here is a 409-residue protein sequence, read N- to C-terminus: Putative integrase/recombinase y4rA (409 aa).

Positions 112–197 (SAVEQHVQAY…ALRSFLSYAR (86 aa)) constitute a Core-binding (CB) domain. The Tyr recombinase domain maps to 220–402 (SIPRAIGRDD…DLDALRTLAL (183 aa)). Active-site residues include Arg260, Lys284, His354, Arg357, and His380. Residue Tyr389 is the O-(3'-phospho-DNA)-tyrosine intermediate of the active site.

Belongs to the 'phage' integrase family.

This is Putative integrase/recombinase y4rA from Sinorhizobium fredii (strain NBRC 101917 / NGR234).